The chain runs to 278 residues: Small ribosomal subunit protein uS9m (278 aa).

The transit peptide at 1–10 (MFSRLSLFRR) directs the protein to the mitochondrion. The interval 259–278 (VERKKPGKKKARKMPTWVKR) is disordered.

It belongs to the universal ribosomal protein uS9 family. Component of the mitochondrial small ribosomal subunit (mt-SSU). Mature yeast 74S mitochondrial ribosomes consist of a small (37S) and a large (54S) subunit. The 37S small subunit contains a 15S ribosomal RNA (15S mt-rRNA) and 34 different proteins. The 54S large subunit contains a 21S rRNA (21S mt-rRNA) and 46 different proteins.

The protein localises to the mitochondrion. Its function is as follows. Component of the mitochondrial ribosome (mitoribosome), a dedicated translation machinery responsible for the synthesis of mitochondrial genome-encoded proteins, including at least some of the essential transmembrane subunits of the mitochondrial respiratory chain. The mitoribosomes are attached to the mitochondrial inner membrane and translation products are cotranslationally integrated into the membrane. The protein is Small ribosomal subunit protein uS9m (MRPS9) of Saccharomyces cerevisiae (strain ATCC 204508 / S288c) (Baker's yeast).